The primary structure comprises 1233 residues: Insulin receptor substrate 1 (1233 aa).

Position 3 is a phosphoserine (Ser-3). The interval 3–133 (SPPDTDGFSD…AGGGCGGSCS (131 aa)) is mediates interaction with PHIP. The region spanning 12 to 115 (DVRKVGYLRK…WYQALLQLHN (104 aa)) is the PH domain. Ser-99 carries the phosphoserine; by CK2 modification. The IRS-type PTB domain occupies 155-259 (FKEVWQVILK…EAMRAMSDEF (105 aa)). Positions 257–425 (DEFRPRSKSQ…SDGGFISSDE (169 aa)) are disordered. The segment covering 264–276 (KSQSSSSCSNPIS) has biased composition (low complexity). Phosphoserine; by RPS6KB1 is present on residues Ser-265 and Ser-302. The residue at position 307 (Ser-307) is a Phosphoserine; by IKKB, MAPK8 and RPS6KB1. Residues Ser-318, Ser-325, Ser-340, and Ser-343 each carry the phosphoserine modification. Over residues 349–358 (THAHRHRGSS) the composition is skewed to basic residues. 2 stretches are compositionally biased toward low complexity: residues 378–399 (SPSA…GSTS) and 407–419 (SSAS…SDGG). A Phosphoserine modification is found at Ser-414. Phosphothreonine occurs at positions 441 and 448. A Phosphotyrosine; by INSR modification is found at Tyr-460. Residues 460–463 (YICM) carry the YXXM motif 1 motif. Ser-522 carries the post-translational modification Phosphoserine; by RPS6KB1. Short sequence motifs (YXXM motif) lie at residues 546–549 (YTEM) and 608–611 (YMPM). Position 608 is a phosphotyrosine; by INSR (Tyr-608). Ser-612 carries the phosphoserine modification. A Phosphotyrosine; by INSR modification is found at Tyr-628. The YXXM motif 4 signature appears at 628–631 (YMPM). Ser-632 bears the Phosphoserine; by RPS6KB1 and ROCK2 mark. The interval 651–720 (QRVDPNGYMM…PPVESGGGKL (70 aa)) is disordered. Tyr-658 is subject to Phosphotyrosine. Residues 658 to 661 (YMMM) carry the YXXM motif 5 motif. Residues 662–689 (SPSGSCSPDIGGGSSSSSSISAAPSGSS) are compositionally biased toward low complexity. Positions 727-730 (YMNM) match the YXXM motif 6 motif. The tract at residues 766–985 (FKHTQRPGEP…VPNSRGDYMT (220 aa)) is disordered. Basic and acidic residues predominate over residues 771–780 (RPGEPEEGAR). Composition is skewed to low complexity over residues 785-794 (RLSSSSGRLR) and 801-810 (DSSSSTSSDS). Residue Ser-789 is modified to Phosphoserine; by AMPK and SIK2. Ser-887 is subject to Phosphoserine. 3 positions are modified to phosphotyrosine; by INSR: Tyr-891, Tyr-935, and Tyr-983. The interval 891–893 (YVN) is GRB2-binding. 3 consecutive short sequence motifs (YXXM motif) follow at residues 935-938 (YMNM), 983-986 (YMTM), and 1006-1009 (YADM). The segment at 1015–1137 (AEKASLPRPT…GSEDVKRHSS (123 aa)) is disordered. Over residues 1032–1042 (STASSSASVTP) the composition is skewed to low complexity. 2 stretches are compositionally biased toward polar residues: residues 1043 to 1052 (QGATAEQATH) and 1069 to 1081 (TRVN…NQSA). Residues Ser-1096 and Ser-1097 each carry the phosphoserine modification. Gly residues predominate over residues 1116–1129 (AAVGGSGGGGGGGS). A Phosphotyrosine; by INSR modification is found at Tyr-1173. Residues 1178 to 1233 (LAKEHSQDCPSQQQSLPPPPPHQPLGSNEGNSPRRSSEDLSNYASISFQKQPEDRQ) form a disordered region. Lys-1180 participates in a covalent cross-link: Glycyl lysine isopeptide (Lys-Gly) (interchain with G-Cter in ubiquitin). A compositionally biased stretch (polar residues) spans 1203–1227 (GSNEGNSPRRSSEDLSNYASISFQK). Tyr-1220 bears the Phosphotyrosine; by INSR mark.

In terms of assembly, interacts (via phosphorylated YXXM motifs) with PIK3R1. Interacts with ROCK1. Interacts with GRB2. Interacts with SOCS7. Interacts (via IRS-type PTB domain) with IGF1R and INSR (via the tyrosine-phosphorylated NPXY motif). Interacts with UBTF and PIK3CA. Interacts (via PH domain) with PHIP. Interacts with FER. Interacts with ALK. Interacts with EIF2AK2/PKR. Interacts with GKAP1. Interacts with DGKZ in the absence of insulin; insulin stimulation decreases this interaction. Found in a ternary complex with DGKZ and PIP5K1A in the absence of insulin stimulation. Interacts with SQSTM1; the interaction is disrupted by the presence of tensin TNS2. Interacts with NCK1 (via SH2 domain). Interacts with NCK2 (via SH3 domain). Interacts with SH2B1; this interaction enhances leptin-induced activation of the PI3-kinase pathway. Interacts with DVL2; this interaction promotes the Wnt/beta-catenin signaling pathway. Serine phosphorylation of IRS1 is a mechanism for insulin resistance. Ser-307 phosphorylation inhibits insulin action through disruption of IRS1 interaction with the insulin receptor. Phosphorylation of Tyr-891 is required for GRB2-binding. Phosphorylated by ALK. Phosphorylated at Ser-265, Ser-302, Ser-632 and Ser-1097 by RPS6KB1; phosphorylation induces accelerated degradation of IRS1. Phosphorylated on tyrosine residues in response to insulin. In skeletal muscles, dephosphorylated on Tyr-608 by TNS2 under anabolic conditions; dephosphorylation results in the proteasomal degradation of IRS1. In terms of processing, ubiquitinated by the Cul7-RING(FBXW8) complex in a mTOR-dependent manner, leading to its degradation: the Cul7-RING(FBXW8) complex recognizes and binds IRS1 previously phosphorylated by S6 kinase (RPS6KB1 or RPS6KB2). Ubiquitinated by TRAF4 through 'Lys-29' linkage; this ubiquitination regulates the interaction of IRS1 with IGFR and IRS1 tyrosine phosphorylation upon IGF1 stimulation. Post-translationally, S-nitrosylation at by BLVRB inhibits its activity. Expressed in osteoblasts, but not in osteoclasts.

It is found in the cytoplasm. The protein localises to the nucleus. Signaling adapter protein that participates in the signal transduction from two prominent receptor tyrosine kinases, insulin receptor/INSR and insulin-like growth factor I receptor/IGF1R. Plays therefore an important role in development, growth, glucose homeostasis as well as lipid metabolism. Upon phosphorylation by the insulin receptor, functions as a signaling scaffold that propagates insulin action through binding to SH2 domain-containing proteins including the p85 regulatory subunit of PI3K, NCK1, NCK2, GRB2 or SHP2. Recruitment of GRB2 leads to the activation of the guanine nucleotide exchange factor SOS1 which in turn triggers the Ras/Raf/MEK/MAPK signaling cascade. Activation of the PI3K/AKT pathway is responsible for most of insulin metabolic effects in the cell, and the Ras/Raf/MEK/MAPK is involved in the regulation of gene expression and in cooperation with the PI3K pathway regulates cell growth and differentiation. Acts a positive regulator of the Wnt/beta-catenin signaling pathway through suppression of DVL2 autophagy-mediated degradation leading to cell proliferation. This is Insulin receptor substrate 1 (Irs1) from Mus musculus (Mouse).